We begin with the raw amino-acid sequence, 376 residues long: tRNA-specific 2-thiouridylase MnmA (376 aa).

ATP is bound by residues 19 to 26 (GMSGGVDS) and Met45. Residues 105-107 (NPD) are interaction with target base in tRNA. The active-site Nucleophile is Cys110. An intrachain disulfide couples Cys110 to Cys210. Gly134 contacts ATP. An interaction with tRNA region spans residues 160–162 (KDQ). Cys210 functions as the Cysteine persulfide intermediate in the catalytic mechanism. Residues 326–327 (RY) form an interaction with tRNA region.

This sequence belongs to the MnmA/TRMU family.

It is found in the cytoplasm. The enzyme catalyses S-sulfanyl-L-cysteinyl-[protein] + uridine(34) in tRNA + AH2 + ATP = 2-thiouridine(34) in tRNA + L-cysteinyl-[protein] + A + AMP + diphosphate + H(+). In terms of biological role, catalyzes the 2-thiolation of uridine at the wobble position (U34) of tRNA, leading to the formation of s(2)U34. In Bordetella petrii (strain ATCC BAA-461 / DSM 12804 / CCUG 43448), this protein is tRNA-specific 2-thiouridylase MnmA.